The following is a 156-amino-acid chain: Small ribosomal subunit protein uS7 (156 aa).

It belongs to the universal ribosomal protein uS7 family. As to quaternary structure, part of the 30S ribosomal subunit. Contacts proteins S9 and S11.

In terms of biological role, one of the primary rRNA binding proteins, it binds directly to 16S rRNA where it nucleates assembly of the head domain of the 30S subunit. Is located at the subunit interface close to the decoding center, probably blocks exit of the E-site tRNA. The chain is Small ribosomal subunit protein uS7 from Azorhizobium caulinodans (strain ATCC 43989 / DSM 5975 / JCM 20966 / LMG 6465 / NBRC 14845 / NCIMB 13405 / ORS 571).